Here is a 490-residue protein sequence, read N- to C-terminus: GTPase Der (490 aa).

2 consecutive EngA-type G domains span residues 3 to 166 (PVVA…MEDL) and 203 to 376 (IKLA…DSST). Residues 9-16 (GRPNVGKS), 56-60 (DTGGI), 118-121 (NKTD), 209-216 (GRPNVGKS), 256-260 (DTAGV), and 321-324 (NKWD) each bind GTP. The KH-like domain occupies 377–461 (RRVGTSMLTR…PIRIQFKEGE (85 aa)).

Belongs to the TRAFAC class TrmE-Era-EngA-EngB-Septin-like GTPase superfamily. EngA (Der) GTPase family. In terms of assembly, associates with the 50S ribosomal subunit.

In terms of biological role, GTPase that plays an essential role in the late steps of ribosome biogenesis. This Escherichia coli O7:K1 (strain IAI39 / ExPEC) protein is GTPase Der.